Reading from the N-terminus, the 629-residue chain is Extracellular metalloproteinase 10 (629 aa).

The first 19 residues, 1–19, serve as a signal peptide directing secretion; the sequence is MHGLLLAAGLLSLPLYTIA. The propeptide occupies 20 to 240; it reads HTQPSGALSR…VHNVVDYVAH (221 aa). 2 N-linked (GlcNAc...) asparagine glycosylation sites follow: N281 and N331. Zn(2+) is bound at residue H424. The active site involves E425. H428 is a binding site for Zn(2+). N469 and N617 each carry an N-linked (GlcNAc...) asparagine glycan.

It belongs to the peptidase M36 family. The cofactor is Zn(2+).

Its subcellular location is the secreted. Secreted metalloproteinase that allows assimilation of proteinaceous substrates and probably acts as a virulence factor. In Coccidioides posadasii (strain C735) (Valley fever fungus), this protein is Extracellular metalloproteinase 10 (MEP10).